Reading from the N-terminus, the 358-residue chain is Probable branched-chain-amino-acid aminotransferase (358 aa).

Lysine 196 is subject to N6-(pyridoxal phosphate)lysine.

It belongs to the class-IV pyridoxal-phosphate-dependent aminotransferase family. Pyridoxal 5'-phosphate serves as cofactor.

It catalyses the reaction L-leucine + 2-oxoglutarate = 4-methyl-2-oxopentanoate + L-glutamate. The catalysed reaction is L-isoleucine + 2-oxoglutarate = (S)-3-methyl-2-oxopentanoate + L-glutamate. The enzyme catalyses L-valine + 2-oxoglutarate = 3-methyl-2-oxobutanoate + L-glutamate. The protein operates within amino-acid biosynthesis; L-isoleucine biosynthesis; L-isoleucine from 2-oxobutanoate: step 4/4. It participates in amino-acid biosynthesis; L-leucine biosynthesis; L-leucine from 3-methyl-2-oxobutanoate: step 4/4. Its pathway is amino-acid biosynthesis; L-valine biosynthesis; L-valine from pyruvate: step 4/4. Functionally, acts on leucine, isoleucine and valine. The sequence is that of Probable branched-chain-amino-acid aminotransferase (ilvE) from Staphylococcus epidermidis (strain ATCC 35984 / DSM 28319 / BCRC 17069 / CCUG 31568 / BM 3577 / RP62A).